The sequence spans 1104 residues: Carbamoyl phosphate synthase large chain (1104 aa).

Residues 1-403 (MPRRQDIQKI…SFQKALRSLE (403 aa)) are carboxyphosphate synthetic domain. The ATP site is built by Arg-129, Arg-170, Gly-176, Gly-177, Gln-209, Leu-211, Glu-216, Gly-242, Ile-243, His-244, Gln-286, and Glu-300. The 197-residue stretch at 133-329 (NEAMDKIGVK…IAKMAAKLAV (197 aa)) folds into the ATP-grasp 1 domain. Mg(2+) contacts are provided by Gln-286, Glu-300, and Asn-302. Mn(2+) contacts are provided by Gln-286, Glu-300, and Asn-302. Positions 404–552 (TGRAGWGCDK…YSTYEEETEV (149 aa)) are oligomerization domain. Residues 553-966 (IPASKPKVMI…AFAKAELGAG (414 aa)) are carbamoyl phosphate synthetic domain. An ATP-grasp 2 domain is found at 703–900 (EKILQKLNIS…LAKLASLIMS (198 aa)). ATP contacts are provided by Arg-739, Lys-778, Leu-780, Glu-785, Gly-811, Ile-812, His-813, Ser-814, Gln-854, and Glu-871. Residues Gln-854, Glu-871, and Asn-873 each contribute to the Mg(2+) site. Mn(2+) contacts are provided by Gln-854, Glu-871, and Asn-873. The 138-residue stretch at 967–1104 (ERLPLTGTVF…KTIQEYCPNF (138 aa)) folds into the MGS-like domain. Residues 967-1104 (ERLPLTGTVF…KTIQEYCPNF (138 aa)) are allosteric domain.

The protein belongs to the CarB family. In terms of assembly, composed of two chains; the small (or glutamine) chain promotes the hydrolysis of glutamine to ammonia, which is used by the large (or ammonia) chain to synthesize carbamoyl phosphate. Tetramer of heterodimers (alpha,beta)4. It depends on Mg(2+) as a cofactor. Mn(2+) serves as cofactor.

The catalysed reaction is hydrogencarbonate + L-glutamine + 2 ATP + H2O = carbamoyl phosphate + L-glutamate + 2 ADP + phosphate + 2 H(+). It carries out the reaction hydrogencarbonate + NH4(+) + 2 ATP = carbamoyl phosphate + 2 ADP + phosphate + 2 H(+). The protein operates within amino-acid biosynthesis; L-arginine biosynthesis; carbamoyl phosphate from bicarbonate: step 1/1. It functions in the pathway pyrimidine metabolism; UMP biosynthesis via de novo pathway; (S)-dihydroorotate from bicarbonate: step 1/3. Its function is as follows. Large subunit of the glutamine-dependent carbamoyl phosphate synthetase (CPSase). CPSase catalyzes the formation of carbamoyl phosphate from the ammonia moiety of glutamine, carbonate, and phosphate donated by ATP, constituting the first step of 2 biosynthetic pathways, one leading to arginine and/or urea and the other to pyrimidine nucleotides. The large subunit (synthetase) binds the substrates ammonia (free or transferred from glutamine from the small subunit), hydrogencarbonate and ATP and carries out an ATP-coupled ligase reaction, activating hydrogencarbonate by forming carboxy phosphate which reacts with ammonia to form carbamoyl phosphate. The polypeptide is Carbamoyl phosphate synthase large chain (Nostoc sp. (strain PCC 7120 / SAG 25.82 / UTEX 2576)).